A 351-amino-acid polypeptide reads, in one-letter code: Phosphoribosylformylglycinamidine cyclo-ligase (351 aa).

Belongs to the AIR synthase family.

Its subcellular location is the cytoplasm. The catalysed reaction is 2-formamido-N(1)-(5-O-phospho-beta-D-ribosyl)acetamidine + ATP = 5-amino-1-(5-phospho-beta-D-ribosyl)imidazole + ADP + phosphate + H(+). Its pathway is purine metabolism; IMP biosynthesis via de novo pathway; 5-amino-1-(5-phospho-D-ribosyl)imidazole from N(2)-formyl-N(1)-(5-phospho-D-ribosyl)glycinamide: step 2/2. This is Phosphoribosylformylglycinamidine cyclo-ligase from Burkholderia ambifaria (strain ATCC BAA-244 / DSM 16087 / CCUG 44356 / LMG 19182 / AMMD) (Burkholderia cepacia (strain AMMD)).